Here is a 402-residue protein sequence, read N- to C-terminus: Envelope glycoprotein D (402 aa).

An N-terminal signal peptide occupies residues Met-1–Cys-30. Residues Glu-31 to Gly-355 are Virion surface-facing. N-linked (GlcNAc...) asparagine; by host glycans are attached at residues Asn-53 and Asn-61. Disulfide bonds link Cys-88-Cys-209, Cys-126-Cys-223, and Cys-138-Cys-147. A disordered region spans residues Pro-281 to Lys-315. N-linked (GlcNAc...) asparagine; by host glycans are attached at residues Asn-297 and Asn-346. A helical transmembrane segment spans residues Leu-356–Leu-372. At Arg-373–Pro-402 the chain is on the intravirion side.

This sequence belongs to the herpesviridae glycoprotein D family.

Its subcellular location is the virion membrane. Its function is as follows. Envelope glycoprotein that binds to host cell entry receptors, promoting the virus entry into host cells. May trigger fusion with host membrane, by recruiting the fusion machinery composed of gB and gH/gL. This chain is Envelope glycoprotein D (gD), found in Equus caballus (Horse).